The primary structure comprises 204 residues: Somatotropin (204 aa).

An N-terminal signal peptide occupies residues 1–17 (MDRVLLLLSVLSLGVSS). At Q18 the chain carries Pyrrolidone carboxylic acid. H36 lines the Zn(2+) pocket. C69 and C177 form a disulfide bridge. E186 contributes to the Zn(2+) binding site. C194 and C202 form a disulfide bridge.

Belongs to the somatotropin/prolactin family.

Its subcellular location is the secreted. Its function is as follows. Growth hormone plays an important role in growth control and is involved in the regulation of several anabolic processes. Implicated as an osmoregulatory substance important for seawater adaptation. In Sciaenops ocellatus (Red drum), this protein is Somatotropin (gh).